Consider the following 506-residue polypeptide: Galactose/methyl galactoside import ATP-binding protein MglA (506 aa).

2 ABC transporter domains span residues 14-249 (LEMS…VGRS) and 264-506 (VILE…SLHL). 46–53 (GENGAGKS) provides a ligand contact to ATP.

The protein belongs to the ABC transporter superfamily. Galactose/methyl galactoside importer (TC 3.A.1.2.3) family. In terms of assembly, the complex is composed of one ATP-binding protein (MglA), two transmembrane proteins (MglC) and a solute-binding protein (MglB).

The protein resides in the cell inner membrane. The enzyme catalyses D-galactose(out) + ATP + H2O = D-galactose(in) + ADP + phosphate + H(+). The catalysed reaction is methyl beta-D-galactoside(out) + ATP + H2O = methyl beta-D-galactoside(in) + ADP + phosphate + H(+). Its function is as follows. Part of the ABC transporter complex MglABC involved in galactose/methyl galactoside import. Responsible for energy coupling to the transport system. This Escherichia coli O157:H7 protein is Galactose/methyl galactoside import ATP-binding protein MglA.